The chain runs to 227 residues: ATP-dependent dethiobiotin synthetase BioD (227 aa).

ATP is bound at residue 13–18 (NIGKTI). T17 contacts Mg(2+). K38 is an active-site residue. S42 is a binding site for substrate. ATP is bound by residues D55, 117–120 (EGFG), 177–178 (NH), 206–208 (PFI), and N213. Mg(2+)-binding residues include D55 and E117.

The protein belongs to the dethiobiotin synthetase family. As to quaternary structure, homodimer. Mg(2+) is required as a cofactor.

It localises to the cytoplasm. The enzyme catalyses (7R,8S)-7,8-diammoniononanoate + CO2 + ATP = (4R,5S)-dethiobiotin + ADP + phosphate + 3 H(+). It functions in the pathway cofactor biosynthesis; biotin biosynthesis; biotin from 7,8-diaminononanoate: step 1/2. In terms of biological role, catalyzes a mechanistically unusual reaction, the ATP-dependent insertion of CO2 between the N7 and N8 nitrogen atoms of 7,8-diaminopelargonic acid (DAPA, also called 7,8-diammoniononanoate) to form a ureido ring. The chain is ATP-dependent dethiobiotin synthetase BioD from Wigglesworthia glossinidia brevipalpis.